Here is a 214-residue protein sequence, read N- to C-terminus: Calcineurin B homologous protein 3 (214 aa).

Gly-2 is lipidated: N-myristoyl glycine. The EF-hand domain maps to Cys-110–Gly-145. Ca(2+) is bound by residues Asp-123, Asp-125, Asp-127, Lys-129, and Glu-134.

This sequence belongs to the calcineurin regulatory subunit family. CHP subfamily. In terms of assembly, monomer. Homodimer.

It is found in the nucleus. The protein localises to the cytoplasm. The protein resides in the membrane. Its subcellular location is the cell membrane. It localises to the cell projection. It is found in the lamellipodium. The protein localises to the ruffle membrane. Functions as an integral cofactor in cell pH regulation by controlling plasma membrane-type Na(+)/H(+) exchange activity. Promotes the induction of hematopoietic stem cell differentiation toward megakaryocytic lineage. Essential for the coupling of ERK cascade activation with the expression of ETS family genes in megakaryocytic differentiation. Also involved in granulocytic differentiation in a ERK-dependent manner. Inhibits the phosphatase activity of calcineurin. This chain is Calcineurin B homologous protein 3, found in Xenopus laevis (African clawed frog).